The sequence spans 141 residues: Large ribosomal subunit protein uL11B (141 aa).

Belongs to the universal ribosomal protein uL11 family. In terms of assembly, part of the ribosomal stalk of the 50S ribosomal subunit. Interacts with L10 and the large rRNA to form the base of the stalk. L10 forms an elongated spine to which L12 dimers bind in a sequential fashion forming a multimeric L10(L12)X complex. In terms of processing, one or more lysine residues are methylated.

In terms of biological role, forms part of the ribosomal stalk which helps the ribosome interact with GTP-bound translation factors. The sequence is that of Large ribosomal subunit protein uL11B from Halalkalibacterium halodurans (strain ATCC BAA-125 / DSM 18197 / FERM 7344 / JCM 9153 / C-125) (Bacillus halodurans).